We begin with the raw amino-acid sequence, 61 residues long: Small ribosomal subunit protein uS14 (61 aa).

Residues Cys-24, Cys-27, Cys-40, and Cys-43 each coordinate Zn(2+).

Belongs to the universal ribosomal protein uS14 family. Zinc-binding uS14 subfamily. As to quaternary structure, part of the 30S ribosomal subunit. Contacts proteins S3 and S10. Zn(2+) serves as cofactor.

Functionally, binds 16S rRNA, required for the assembly of 30S particles and may also be responsible for determining the conformation of the 16S rRNA at the A site. In Macrococcus caseolyticus (strain JCSC5402) (Macrococcoides caseolyticum), this protein is Small ribosomal subunit protein uS14.